We begin with the raw amino-acid sequence, 397 residues long: MNKNRGFTPLAVVLMLSGSLALTGCDDKQAQQGGQQMPAVGVVTVKTEPLQITTELPGRTSAYRIAEVRPQVSGIILKRNFKEGSDIEAGVSLYQIDPATYQATYDSAKGDLAKAQAAANIAQLTVNRYQKLLGTQYISKQEYDQALADAQQANAAVTAAKAAVETARINLAYTKVTSPISGRIGKSNVTEGALVQNGQATALATVQQLDPIYVDVTQSSNDFLRLKQELANGTLKQENGKAKVSLITSDGIKFPQDGTLEFSDVTVDQTTGSITLRAIFPNPDHTLLPGMFVRARLEEGLNPNAILVPQQGVTRTPRGDATVLVVGADDKVETRPIVASQAIGDKWLVTEGLKAGDRVVISGLQKVRPGVQVKAQEVTADNNQQAASGAQPEQSKS.

Residues 1-24 form the signal peptide; the sequence is MNKNRGFTPLAVVLMLSGSLALTG. Cysteine 25 carries the N-palmitoyl cysteine lipid modification. Cysteine 25 carries the S-diacylglycerol cysteine lipid modification. Residues 98 to 172 are a coiled coil; it reads PATYQATYDS…AVETARINLA (75 aa). The interval 377–397 is disordered; the sequence is EVTADNNQQAASGAQPEQSKS. Residues 379–397 show a composition bias toward polar residues; it reads TADNNQQAASGAQPEQSKS.

It belongs to the membrane fusion protein (MFP) (TC 8.A.1) family. In terms of assembly, monomeric in solution. Homotrimeric; interacts independently with AcrB and TolC as well as AcrZ. Part of the AcrA-AcrB-TolC efflux pump.

It localises to the cell inner membrane. AcrA-AcrB-AcrZ-TolC is a drug efflux protein complex with broad substrate specificity that uses the proton motive force to export substrates. This subunit may act as an adapter protein that links AcrB and TolC stably together. The protein is Multidrug efflux pump subunit AcrA (acrA) of Escherichia coli O157:H7.